The following is a 180-amino-acid chain: Hypoxanthine-guanine phosphoribosyltransferase (180 aa).

Diphosphate-binding residues include Lys-43 and Gly-44. Mg(2+)-binding residues include Glu-99 and Asp-100. Asp-103 acts as the Proton acceptor in catalysis. GMP-binding positions include Lys-131, 152–153, and Asp-159; that span reads FI. Arg-165 is a binding site for diphosphate.

It belongs to the purine/pyrimidine phosphoribosyltransferase family. The cofactor is Mg(2+).

It is found in the cytoplasm. It catalyses the reaction IMP + diphosphate = hypoxanthine + 5-phospho-alpha-D-ribose 1-diphosphate. The catalysed reaction is GMP + diphosphate = guanine + 5-phospho-alpha-D-ribose 1-diphosphate. Its pathway is purine metabolism; IMP biosynthesis via salvage pathway; IMP from hypoxanthine: step 1/1. It functions in the pathway purine metabolism; GMP biosynthesis via salvage pathway; GMP from guanine: step 1/1. Its function is as follows. Purine salvage pathway enzyme that catalyzes the transfer of the ribosyl-5-phosphate group from 5-phospho-alpha-D-ribose 1-diphosphate (PRPP) to the N9 position of the 6-oxopurines hypoxanthine and guanine to form the corresponding ribonucleotides IMP (inosine 5'-monophosphate) and GMP (guanosine 5'-monophosphate), with the release of PPi. This Streptococcus mutans serotype c (strain ATCC 700610 / UA159) protein is Hypoxanthine-guanine phosphoribosyltransferase (hpt).